A 398-amino-acid polypeptide reads, in one-letter code: Small ribosomal subunit protein mS29 (398 aa).

The transit peptide at 1–21 directs the protein to the mitochondrion; the sequence is MMLKGITRLISRIHKLDPGRF. The segment at 39 to 67 is disordered; sequence QVPVESPRAISRTNENDPAKHGDQHEGQH. The segment covering 52-66 has biased composition (basic and acidic residues); the sequence is NENDPAKHGDQHEGQ. Residues Met-100 and 128–135 contribute to the GTP site; that span reads GEKGTGKT. N6-acetyllysine is present on residues Lys-175 and Lys-207.

Belongs to the mitochondrion-specific ribosomal protein mS29 family. In terms of assembly, component of the mitochondrial small ribosomal subunit (mt-SSU). Mature mammalian 55S mitochondrial ribosomes consist of a small (28S) and a large (39S) subunit. The 28S small subunit contains a 12S ribosomal RNA (12S mt-rRNA) and 30 different proteins. The 39S large subunit contains a 16S rRNA (16S mt-rRNA), a copy of mitochondrial valine transfer RNA (mt-tRNA(Val)), which plays an integral structural role, and 52 different proteins. Interacts with DELE1. Interacts with NOA1. In terms of tissue distribution, ubiquitous.

Its subcellular location is the mitochondrion. The enzyme catalyses GTP + H2O = GDP + phosphate + H(+). Functionally, as a component of the mitochondrial small ribosomal subunit, it plays a role in the translation of mitochondrial mRNAs. Involved in mediating interferon-gamma-induced cell death. Displays GTPase activity in vitro. The protein is Small ribosomal subunit protein mS29 of Homo sapiens (Human).